The following is a 1687-amino-acid chain: Vitellogenin-2 (1687 aa).

The signal sequence occupies residues 1-15 (MRVLVLALTVALVAG). The Vitellogenin domain maps to 24 to 663 (FAPGKTYEYK…DAATVLPKNI (640 aa)). Asparagine 941, asparagine 945, asparagine 954, asparagine 1004, asparagine 1019, and asparagine 1083 each carry an N-linked (GlcNAc...) asparagine glycan. A disordered region spans residues 1081–1174 (LKNSTKASSS…SSSSSKTKWQ (94 aa)). Over residues 1088-1127 (SSSSSGSSRSSRSRSSSSSSSSSSSSSSRSSSSSSRSSSS) the composition is skewed to low complexity. Asparagine 1142 carries an N-linked (GlcNAc...) asparagine glycan. The span at 1148–1169 (SSSSSSSSSSSSSSSSSSSSSS) shows a compositional bias: low complexity. Residues asparagine 1179, asparagine 1257, asparagine 1292, asparagine 1342, asparagine 1361, asparagine 1366, and asparagine 1390 are each glycosylated (N-linked (GlcNAc...) asparagine). The 177-residue stretch at 1417-1593 (AECTVVEDTV…SWVLPAKSCR (177 aa)) folds into the VWFD domain. Intrachain disulfides connect cysteine 1419/cysteine 1556 and cysteine 1442/cysteine 1592. 2 N-linked (GlcNAc...) asparagine glycosylation sites follow: asparagine 1577 and asparagine 1655.

Post-translationally, phosvitin, an egg yolk storage protein, is one of the most highly phosphorylated (10%) proteins in nature. Produced by the liver, secreted into the blood and then sequestered by receptor mediated endocytosis into growing oocytes, where it is generally cleaved, giving rise to the respective yolk components lipovitellins and phosvitin.

Functionally, precursor of the egg-yolk proteins that are sources of nutrients during early development of oviparous organisms. In Fundulus heteroclitus (Killifish), this protein is Vitellogenin-2.